The following is a 395-amino-acid chain: Elongation factor Tu (395 aa).

The region spanning 10 to 204 (KPHVNIGTIG…VVDEYIPTPV (195 aa)) is the tr-type G domain. The G1 stretch occupies residues 19 to 26 (GHVDHGKT). 19–26 (GHVDHGKT) is a GTP binding site. Thr26 is a binding site for Mg(2+). A G2 region spans residues 60 to 64 (GITIN). The segment at 81-84 (DAPG) is G3. Residues 81–85 (DAPGH) and 136–139 (NKTD) contribute to the GTP site. Residues 136–139 (NKTD) form a G4 region. The segment at 174 to 176 (SAL) is G5.

The protein belongs to the TRAFAC class translation factor GTPase superfamily. Classic translation factor GTPase family. EF-Tu/EF-1A subfamily. Monomer.

The protein localises to the cytoplasm. It carries out the reaction GTP + H2O = GDP + phosphate + H(+). Functionally, GTP hydrolase that promotes the GTP-dependent binding of aminoacyl-tRNA to the A-site of ribosomes during protein biosynthesis. This Lactiplantibacillus plantarum (strain ATCC BAA-793 / NCIMB 8826 / WCFS1) (Lactobacillus plantarum) protein is Elongation factor Tu.